Reading from the N-terminus, the 628-residue chain is uncharacterized protein (628 aa).

Disordered stretches follow at residues 1–65 and 80–125; these read MDTN…ISSA and SLRN…VSLS. The span at 12–21 shows a compositional bias: low complexity; it reads ISPSIASSFP. Residues 25 to 37 are compositionally biased toward polar residues; that stretch reads PFSSQNSTTSNPE. Low complexity-rich tracts occupy residues 48-64 and 87-102; these read SSII…NISS and SPHI…SSSS. The span at 103 to 116 shows a compositional bias: basic and acidic residues; sequence DLDKSMLDEKHPDS. 12 consecutive transmembrane segments (helical) span residues 157–177, 203–223, 230–250, 259–279, 294–314, 324–344, 417–437, 454–474, 483–503, 511–531, 542–562, and 583–603; these read IITC…SISL, VGTG…NLLM, LWLS…AVLG, FIAL…GFAF, IGWY…LSAA, LYGY…QGLF, LWPP…LVNY, VSLL…TVLP, MLFF…TTFV, VGLL…MTWV, VGVA…SVVA, and MCGM…VQKF.

It belongs to the major facilitator superfamily. Allantoate permease family.

The protein resides in the membrane. This is an uncharacterized protein from Schizosaccharomyces pombe (strain 972 / ATCC 24843) (Fission yeast).